A 441-amino-acid polypeptide reads, in one-letter code: Rho-associated protein kinase 1 (441 aa).

Positions asparagine 1–lysine 99 form a coiled coil. The SHROOM3 binding stretch occupies residues glutamate 114 to serine 353. Residues threonine 356–phenylalanine 422 enclose the RhoBD domain. Positions asparagine 418–lysine 441 form a coiled coil.

The protein belongs to the protein kinase superfamily. AGC Ser/Thr protein kinase family. As to quaternary structure, homodimer. Interacts with RHOA (activated by GTP), RHOB, RHOC, GEM, MYLC2B, RHOE, PPP1R12A, LIMK1, LIMK2, TSG101, CHORDC1, DAPK3, PFN1, PTEN and JIP3. Interacts with FHOD1 in a Src-dependent manner. Interacts with ITGB1BP1 (via N-terminus and PTB domain). Interacts with SHROOM3. It depends on Mg(2+) as a cofactor.

Its subcellular location is the cytoplasm. It localises to the golgi apparatus membrane. The protein localises to the cytoskeleton. It is found in the microtubule organizing center. The protein resides in the centrosome. Its subcellular location is the centriole. It localises to the cell projection. The protein localises to the bleb. It is found in the cell membrane. The protein resides in the lamellipodium. Its subcellular location is the ruffle. It catalyses the reaction L-seryl-[protein] + ATP = O-phospho-L-seryl-[protein] + ADP + H(+). It carries out the reaction L-threonyl-[protein] + ATP = O-phospho-L-threonyl-[protein] + ADP + H(+). Its activity is regulated as follows. Activated by RHOA binding. Inhibited by Y-27632. Its function is as follows. Protein kinase which is a key regulator of the actin cytoskeleton and cell polarity. Involved in regulation of smooth muscle contraction, actin cytoskeleton organization, stress fiber and focal adhesion formation, neurite retraction, cell adhesion and motility via phosphorylation of DAPK3, GFAP, LIMK1, LIMK2, MYL9/MLC2, TPPP, PFN1 and PPP1R12A. Phosphorylates FHOD1 and acts synergistically with it to promote SRC-dependent non-apoptotic plasma membrane blebbing. Phosphorylates JIP3 and regulates the recruitment of JNK to JIP3 upon UVB-induced stress. Acts as a suppressor of inflammatory cell migration by regulating PTEN phosphorylation and stability. Acts as a negative regulator of VEGF-induced angiogenic endothelial cell activation. Required for centrosome positioning and centrosome-dependent exit from mitosis. Plays a role in terminal erythroid differentiation. Inhibits podocyte motility via regulation of actin cytoskeletal dynamics and phosphorylation of CFL1. Promotes keratinocyte terminal differentiation. Involved in osteoblast compaction through the fibronectin fibrillogenesis cell-mediated matrix assembly process, essential for osteoblast mineralization. May regulate closure of the eyelids and ventral body wall by inducing the assembly of actomyosin bundles. The sequence is that of Rho-associated protein kinase 1 (ROCK1) from Bos taurus (Bovine).